A 323-amino-acid polypeptide reads, in one-letter code: MTSYALVGDVGGTNARLALCAVATGEISQAKTYSGLDYDSLEAVIKQYLSEHKVTVEHACIAIACPITGDWVAMTNHTWAFSIAAMQQNLGLKHLEIINDFTAVSMAIPMLSEQDVLQFGGTSPQPGKPVAVYGAGTGLGVAHLVNVDSRWISLPGEGGHVDFAPNSEEEDRILAVLRQELGHVSAERVLSGPGLVNLYRAIVISDGRLPENLAPKDVTERALADSCTDCRRALSLFCVIMGRFGGNLALNLSTFGGVYIAGGIVPRFMEFFKASGFRGAFEDKGRFKDFLQDIPVYMITHQQPGLLGAGAYLRQKLGYTLHP.

An ATP-binding site is contributed by 8 to 13 (GDVGGT).

Belongs to the bacterial glucokinase family.

The protein localises to the cytoplasm. It carries out the reaction D-glucose + ATP = D-glucose 6-phosphate + ADP + H(+). The protein is Glucokinase of Yersinia enterocolitica serotype O:8 / biotype 1B (strain NCTC 13174 / 8081).